The primary structure comprises 22 residues: Myofibril-bound serine protease (22 aa).

Belongs to the peptidase S1 family. Detected in muscle (at protein level).

The protein localises to the cytoplasm. Its activity is regulated as follows. Inhibited by the serine protease inhibitors, antipain, aprotinin, DFP, leupeptin, STI and TLCK, and by the cysteine proteinase inhibitors DTNB and to a lesser extent E-64. Not inhibited by the metalloproteinase inhibitor EDTA. Its function is as follows. Serine protease that selectively cleaves Arg-|-Xaa bonds. This is Myofibril-bound serine protease from Cyprinus carpio (Common carp).